The chain runs to 55 residues: Mannose/glucose-specific lectin alpha chain (55 aa).

The protein belongs to the leguminous lectin family. As to quaternary structure, tetramer of two alpha and two beta chains.

The polypeptide is Mannose/glucose-specific lectin alpha chain (Lathyrus sativus (White vetchling)).